The sequence spans 222 residues: MEKLTLSFITLTVLSAIFTAASAADATPSQVVLDIAGHPVQSNVQYYIIPAKIGTGGGLIPSNRNLSTQDLCLNLDIVQSSSPFVSGLPVTFSPLNTKVKHVQLSASLNLEFDSTVWLCPDSKVWRIDHSVQLRKSFVSIGGQKGKGNSWFQIQEDGDAYKLMYCPISSIVACINVSLEIDDHGVRRLVLSTDQSFVVKFQKAYDSNSNCNLKSNSRMFLFL.

The N-terminal stretch at 1-23 (MEKLTLSFITLTVLSAIFTAASA) is a signal peptide. A glycan (N-linked (GlcNAc...) asparagine) is linked at Asn65. 2 disulfide bridges follow: Cys72–Cys119 and Cys165–Cys173. N-linked (GlcNAc...) asparagine glycosylation occurs at Asn175.

The protein belongs to the protease inhibitor I3 (leguminous Kunitz-type inhibitor) family.

Exhibits Kunitz trypsin protease inhibitor activity. In Arabidopsis thaliana (Mouse-ear cress), this protein is Kunitz trypsin inhibitor 3.